A 236-amino-acid polypeptide reads, in one-letter code: Cytochrome c biogenesis ATP-binding export protein CcmA (236 aa).

In terms of domain architecture, ABC transporter spans leucine 14–glutamate 235. Glycine 46–threonine 53 contributes to the ATP binding site.

This sequence belongs to the ABC transporter superfamily. CcmA exporter (TC 3.A.1.107) family. In terms of assembly, the complex is composed of two ATP-binding proteins (CcmA) and two transmembrane proteins (CcmB).

Its subcellular location is the cell inner membrane. The catalysed reaction is heme b(in) + ATP + H2O = heme b(out) + ADP + phosphate + H(+). Part of the ABC transporter complex CcmAB involved in the biogenesis of c-type cytochromes; once thought to export heme, this seems not to be the case, but its exact role is uncertain. Responsible for energy coupling to the transport system. The protein is Cytochrome c biogenesis ATP-binding export protein CcmA of Alkalilimnicola ehrlichii (strain ATCC BAA-1101 / DSM 17681 / MLHE-1).